Consider the following 367-residue polypeptide: Glutamate 5-kinase (367 aa).

An ATP-binding site is contributed by K17. Substrate-binding residues include S57, D144, and N156. ATP contacts are provided by residues 176–177 (SD) and 217–223 (TGGMTSK). The PUA domain maps to 279 to 357 (AGALTLDEGA…SELPGELRRP (79 aa)).

It belongs to the glutamate 5-kinase family.

Its subcellular location is the cytoplasm. It carries out the reaction L-glutamate + ATP = L-glutamyl 5-phosphate + ADP. Its pathway is amino-acid biosynthesis; L-proline biosynthesis; L-glutamate 5-semialdehyde from L-glutamate: step 1/2. Its function is as follows. Catalyzes the transfer of a phosphate group to glutamate to form L-glutamate 5-phosphate. This is Glutamate 5-kinase from Mycolicibacterium paratuberculosis (strain ATCC BAA-968 / K-10) (Mycobacterium paratuberculosis).